Here is a 199-residue protein sequence, read N- to C-terminus: Large ribosomal subunit protein bL25 (199 aa).

This sequence belongs to the bacterial ribosomal protein bL25 family. CTC subfamily. Part of the 50S ribosomal subunit; part of the 5S rRNA/L5/L18/L25 subcomplex. Contacts the 5S rRNA. Binds to the 5S rRNA independently of L5 and L18.

This is one of the proteins that binds to the 5S RNA in the ribosome where it forms part of the central protuberance. The chain is Large ribosomal subunit protein bL25 from Pelobacter propionicus (strain DSM 2379 / NBRC 103807 / OttBd1).